The chain runs to 305 residues: Olfactory receptor 4X1 (305 aa).

Residues 1–23 are Extracellular-facing; the sequence is MVATNNVTEIIFVGFSQNWSEQR. N-linked (GlcNAc...) asparagine glycans are attached at residues N6 and N18. The chain crosses the membrane as a helical span at residues 24–47; that stretch reads VISVMFLLMYTAVVLGNGLIVVTI. Topologically, residues 48–55 are cytoplasmic; sequence LASKVLTS. Residues 56-77 traverse the membrane as a helical segment; that stretch reads PMYFFLSYLSFVEICYCSVMAP. Topologically, residues 78–98 are extracellular; sequence KLIFDSFIKRKVISLKGCLTQ. A disulfide bridge connects residues C95 and C187. Residues 99-118 form a helical membrane-spanning segment; sequence MFSLHFFGGTEAFLLMVMAY. Residues 119 to 137 are Cytoplasmic-facing; it reads DRYVAICKPLHYMAIMNQR. The chain crosses the membrane as a helical span at residues 138–156; sequence MCGLLVRIAWGGGLLHSVG. Topologically, residues 157–193 are extracellular; that stretch reads QTFLIFQLPFCGPNIMDHYFCDVHPVLELACADTFFI. Residues 194–217 form a helical membrane-spanning segment; it reads SLLIITNGGSISVVSFFVLMASYL. The Cytoplasmic portion of the chain corresponds to 218 to 233; the sequence is IILHFLRSHNLEGQHK. Residues 234 to 256 traverse the membrane as a helical segment; sequence ALSTCASHVTVVDLFFIPCSLVY. Topologically, residues 257–267 are extracellular; it reads IRPCVTLPADK. Residues 268–287 traverse the membrane as a helical segment; the sequence is IVAVFYTVVTPLLNPVIYSF. Topologically, residues 288-305 are cytoplasmic; that stretch reads RNAEVKNAMRRFIGGKVI.

Belongs to the G-protein coupled receptor 1 family.

The protein resides in the cell membrane. Functionally, odorant receptor. The sequence is that of Olfactory receptor 4X1 (OR4X1) from Homo sapiens (Human).